The following is a 467-amino-acid chain: Glutamate--tRNA ligase (467 aa).

Residues 9–19 (PSPTGYLHIGG) carry the 'HIGH' region motif. The 'KMSKS' region motif lies at 237 to 241 (KLSKR). Residue Lys240 participates in ATP binding.

Belongs to the class-I aminoacyl-tRNA synthetase family. Glutamate--tRNA ligase type 1 subfamily. Monomer.

Its subcellular location is the cytoplasm. It catalyses the reaction tRNA(Glu) + L-glutamate + ATP = L-glutamyl-tRNA(Glu) + AMP + diphosphate. Functionally, catalyzes the attachment of glutamate to tRNA(Glu) in a two-step reaction: glutamate is first activated by ATP to form Glu-AMP and then transferred to the acceptor end of tRNA(Glu). In Xanthomonas oryzae pv. oryzae (strain MAFF 311018), this protein is Glutamate--tRNA ligase.